Reading from the N-terminus, the 757-residue chain is Exo-alpha-(1-&gt;6)-L-arabinopyranosidase (757 aa).

Asp-232 is an active-site residue.

The protein belongs to the glycosyl hydrolase 3 family. Homotetramer.

With respect to regulation, completely inhibited by Cu(2+) and activated by Co(2+). Functionally, catalyzes the hydrolysis of a non-reducing terminal alpha-L-arabinopyranosidic linkage in ginsenoside Rb2 (alpha-L-arabinopyranosyl-(1-&gt;6)-alpha-D-glucopyranosyl) to release alpha-D-glucopyranosyl (Rd). It is not able to hydrolyze alpha-L-arabinofuranosyl-(1-&gt;6)-alpha-D-glucopyranosyl (Rc). The polypeptide is Exo-alpha-(1-&gt;6)-L-arabinopyranosidase (apy) (Bifidobacterium longum).